Consider the following 482-residue polypeptide: Proton extrusion protein PxcA (482 aa).

4 consecutive transmembrane segments (helical) span residues 265-285, 359-379, 406-426, and 442-462; these read FVLG…NLVI, PLKN…YFVL, IIIL…WEVI, and FINM…KYWI.

This sequence belongs to the CemA family.

It is found in the cell inner membrane. In terms of biological role, required for H(+) efflux immediately after light irradiation to form a rapid H(+) concentration gradient across the thylakoid membranes. Together with PxcL, contributes to transient H(+) uptake following dark to light transition. The polypeptide is Proton extrusion protein PxcA (Acaryochloris marina (strain MBIC 11017)).